A 347-amino-acid polypeptide reads, in one-letter code: Subtilase cytotoxin subunit A (347 aa).

A signal peptide spans 1–21 (MLKILWTYILFLLFISASARA). The Peptidase S8 domain occupies 24–327 (PWYFDAIGLT…GRVLNAEKAI (304 aa)). Residues D52, H89, and S272 each act as charge relay system in the active site. C288 and C331 are disulfide-bonded. Residues 322 to 347 (NAEKAISMFCKKNYIPVRQGRMSEEL) form an A2 domain region. Residues 344–347 (SEEL) carry the Prevents secretion from ER motif.

Belongs to the peptidase S8 family. In terms of assembly, forms a complex with SubB with the stoichiometry SubA1:SubB5 (called SubAB5).

It localises to the secreted. The protein localises to the host cytoplasm. It is found in the host cytosol. Its subcellular location is the host endoplasmic reticulum lumen. Protease subunit of subtilase cytotoxin SubAB5. An endoprotease specific for host endoplasmic reticulum (ER) chaperone BiP/HSPA5, has no activity on human HSP70 or HSPA8. Cleaves between 'Leu-416' and 'Leu-417' of BiP/HSPA5 in the hinge between BiP's ATPase and protein-binding domains. This induces host ER stress response and eventual cell death. Culture supernatant of E.coli expressing both subA and subB are toxic for Vero cells (African green monkey kidney cell line), Chinese hamster ovary cells and Hct-8 cells (human colonic epithelial cell line); the subunits are not toxic individually. Purified SubAB5 is highly toxic, &lt;0.1 pg is able to kill at least 50% of 30'000 Vero cells in a microtiter plate assay after 3 days; no cytotoxicity is seen at 24 hours. Preabsorption with cells expressing a ganglioside GM2 mimic reduced cytotoxicity of SubAB5 by 93% in the Vero cytotoxicity assay. Intraperitoneal injection of 200 ng of purified SubAB5 kills mice; the higher the dose the faster the mice die. Animals injected intraperitoneally with purified SubAB5 have microvascular thrombi in the brain and other organs, including the renal tubules and glomeruli. Injection induces an unfolded response in mice. Mice fed E.coli cells expressing cloned SubAB5 experience drastic weight loss and appear ill and lethargic. Protein synthesis in Vero cells is transiently inhibited by SubAB5; both subunits are required for this effect. Inhibition of protein synthesis is prevented by brefeldin A; cells are arrested in the G1 phase. SubAB5 at 100 ng/ml induced caspase-dependent apoptosis in Vero cells through mitochondrial membrane damage. This Escherichia coli protein is Subtilase cytotoxin subunit A.